The sequence spans 320 residues: ATP-dependent 6-phosphofructokinase (320 aa).

Residues Gly-11, 72–73 (RY), and 102–105 (GDGS) each bind ATP. Asp-103 is a binding site for Mg(2+). Residues 125-127 (TID), Arg-162, 169-171 (MGR), Glu-222, Arg-243, and 249-252 (HMQR) each bind substrate. Catalysis depends on Asp-127, which acts as the Proton acceptor.

The protein belongs to the phosphofructokinase type A (PFKA) family. ATP-dependent PFK group I subfamily. Prokaryotic clade 'B1' sub-subfamily. As to quaternary structure, homotetramer. It depends on Mg(2+) as a cofactor.

Its subcellular location is the cytoplasm. The catalysed reaction is beta-D-fructose 6-phosphate + ATP = beta-D-fructose 1,6-bisphosphate + ADP + H(+). It functions in the pathway carbohydrate degradation; glycolysis; D-glyceraldehyde 3-phosphate and glycerone phosphate from D-glucose: step 3/4. Allosterically activated by ADP and other diphosphonucleosides, and allosterically inhibited by phosphoenolpyruvate. Functionally, catalyzes the phosphorylation of D-fructose 6-phosphate to fructose 1,6-bisphosphate by ATP, the first committing step of glycolysis. The polypeptide is ATP-dependent 6-phosphofructokinase (Lactiplantibacillus plantarum (strain ATCC BAA-793 / NCIMB 8826 / WCFS1) (Lactobacillus plantarum)).